The primary structure comprises 201 residues: Small ribosomal subunit protein uS4c (201 aa).

A disordered region spans residues 16 to 43 (GALPGLTSKKPRSASDLRNQSRSGKRSQ). The region spanning 89-169 (MRLDNILFRL…LPKHLTLHSF (81 aa)) is the S4 RNA-binding domain.

The protein belongs to the universal ribosomal protein uS4 family. In terms of assembly, part of the 30S ribosomal subunit. Contacts protein S5. The interaction surface between S4 and S5 is involved in control of translational fidelity.

It localises to the plastid. The protein resides in the chloroplast. Its function is as follows. One of the primary rRNA binding proteins, it binds directly to 16S rRNA where it nucleates assembly of the body of the 30S subunit. Functionally, with S5 and S12 plays an important role in translational accuracy. In Nymphaea alba (White water-lily), this protein is Small ribosomal subunit protein uS4c (rps4).